Consider the following 124-residue polypeptide: Small ribosomal subunit protein uS12 (124 aa).

Asp89 is subject to 3-methylthioaspartic acid. The disordered stretch occupies residues 105-124; the sequence is TGVDSRMQGRSKYGTKKPKK.

The protein belongs to the universal ribosomal protein uS12 family. As to quaternary structure, part of the 30S ribosomal subunit. Contacts proteins S8 and S17. May interact with IF1 in the 30S initiation complex.

Its function is as follows. With S4 and S5 plays an important role in translational accuracy. In terms of biological role, interacts with and stabilizes bases of the 16S rRNA that are involved in tRNA selection in the A site and with the mRNA backbone. Located at the interface of the 30S and 50S subunits, it traverses the body of the 30S subunit contacting proteins on the other side and probably holding the rRNA structure together. The combined cluster of proteins S8, S12 and S17 appears to hold together the shoulder and platform of the 30S subunit. This is Small ribosomal subunit protein uS12 from Vesicomyosocius okutanii subsp. Calyptogena okutanii (strain HA).